The following is a 199-amino-acid chain: Recombination protein RecR (199 aa).

The C4-type zinc finger occupies 56-71 (CQRCNTFTEGDICERC). A Toprim domain is found at 79–174 (ELLCVVETPV…GVTRIARGVP (96 aa)).

The protein belongs to the RecR family.

In terms of biological role, may play a role in DNA repair. It seems to be involved in an RecBC-independent recombinational process of DNA repair. It may act with RecF and RecO. In Dechloromonas aromatica (strain RCB), this protein is Recombination protein RecR.